Here is a 152-residue protein sequence, read N- to C-terminus: Transcriptional regulator MraZ (152 aa).

2 consecutive SpoVT-AbrB domains span residues 5 to 52 (ASAI…PLHE) and 81 to 124 (AQDC…EESA).

The protein belongs to the MraZ family. As to quaternary structure, forms oligomers.

It localises to the cytoplasm. It is found in the nucleoid. The chain is Transcriptional regulator MraZ from Shewanella frigidimarina (strain NCIMB 400).